The primary structure comprises 198 residues: Probable GTP-binding protein EngB (198 aa).

The EngB-type G domain maps to 21–195; sequence NFSEVAFLGR…EDIIIDQTLG (175 aa). GTP-binding positions include 29 to 36, 56 to 60, 81 to 84, 151 to 154, and 174 to 176; these read GRSNVGKS, GKTQL, DLPG, TKCD, and VSN. Mg(2+) is bound by residues Ser-36 and Thr-58.

It belongs to the TRAFAC class TrmE-Era-EngA-EngB-Septin-like GTPase superfamily. EngB GTPase family. Mg(2+) serves as cofactor.

Necessary for normal cell division and for the maintenance of normal septation. This is Probable GTP-binding protein EngB from Campylobacter jejuni subsp. jejuni serotype O:6 (strain 81116 / NCTC 11828).